Here is a 446-residue protein sequence, read N- to C-terminus: MKAAVEKLDKNQVLLEVEVEAPRVQKAIDQAYRRLVKQVNIPGFRKGKAPRFILEQYIGKEPIYNEAAEIVIPPAYEEAVAEHQLEPIDRPEVEIVKVEDGEPLVFKARVEVKPEVQLGPYTGLEVERQEVEVTEADIDAYLKRLQERYAELEVIEDEPAAAGDIVTIDFKGTVDGQPYPGMEGNNYPLELGSGTFITGFEEQLVGARVNEERTVNVTFPSDYHEKDLAGKEAVFQVTVRGIKRKKLAPLDDEFAKDVSECETLADLRQDIRRRLEESQKQRVEAAVRQAVVEKAVAAATVELPEVMVERRIDARIRELERNLQAQKMTLEEFLKNTDKTIGDLEKEFRPGAERDVKTELVLEAIAKAENIQPSQEEIDAEIERMARIFRQDPDTVRKNLGDLSVLKYDIMIKKTIDFLVEHSKPVPPREQGAAGETAETAEATPA.

In terms of domain architecture, PPIase FKBP-type spans 163 to 248 (GDIVTIDFKG…VRGIKRKKLA (86 aa)). A disordered region spans residues 423-446 (SKPVPPREQGAAGETAETAEATPA). Over residues 432–446 (GAAGETAETAEATPA) the composition is skewed to low complexity.

The protein belongs to the FKBP-type PPIase family. Tig subfamily.

The protein localises to the cytoplasm. The catalysed reaction is [protein]-peptidylproline (omega=180) = [protein]-peptidylproline (omega=0). Functionally, involved in protein export. Acts as a chaperone by maintaining the newly synthesized protein in an open conformation. Functions as a peptidyl-prolyl cis-trans isomerase. The polypeptide is Trigger factor (Moorella thermoacetica (strain ATCC 39073 / JCM 9320)).